Here is a 960-residue protein sequence, read N- to C-terminus: Pentatricopeptide repeat-containing protein At3g63370, chloroplastic (960 aa).

The transit peptide at 1-64 (MEYAVTNMRL…PKLACFDGVL (64 aa)) directs the protein to the chloroplast. 20 PPR repeats span residues 79–109 (PVEA…IFKT), 115–145 (LDFL…MPDR), 146–180 (TAFA…GVPL), 181–215 (GLSS…GYHS), 216–246 (TGFI…FQEK), 248–282 (DAVL…GPAP), 283–317 (NSYT…STHS), 319–349 (ELYV…MNNA), 350–384 (DVVT…GHKS), 385–419 (DEVS…GWDS), 420–450 (NLQV…MHDK), 451–485 (DLIS…RMEI), 486–516 (DEMI…ILRK), 520–550 (DTVI…IKGK), 551–585 (DVVS…GLSA), 586–620 (DSVA…GFCL), 621–651 (EGSI…IERK), 652–686 (GLLQ…NVSP), 687–717 (DHIS…MEHE), and 723–753 (WPEH…MKTE). Residues 758-833 (VWCALLAACR…HPGCSWIEMD (76 aa)) form a type E motif region. The segment at 834 to 864 (GKVHKFTARDKSHPESKEIYEKLSEVTRKLE) is type E(+) motif. Residues 865–960 (REVGYVADTK…SGLCSCGDSW (96 aa)) form a type DYW motif region.

This sequence belongs to the PPR family. PCMP-H subfamily.

It localises to the plastid. Its subcellular location is the chloroplast. In terms of biological role, involved in RNA editing event in chloroplasts. Required for the editing of a single site in rps14 transcript. This is Pentatricopeptide repeat-containing protein At3g63370, chloroplastic (PCMP-H83) from Arabidopsis thaliana (Mouse-ear cress).